The chain runs to 354 residues: Protein RecA (354 aa).

67–74 (GPESSGKT) contacts ATP. The segment at 333–354 (MNEFVPSSEEQAEASLSEDHDQ) is disordered.

This sequence belongs to the RecA family.

It localises to the cytoplasm. In terms of biological role, can catalyze the hydrolysis of ATP in the presence of single-stranded DNA, the ATP-dependent uptake of single-stranded DNA by duplex DNA, and the ATP-dependent hybridization of homologous single-stranded DNAs. It interacts with LexA causing its activation and leading to its autocatalytic cleavage. In Laribacter hongkongensis (strain HLHK9), this protein is Protein RecA.